The chain runs to 342 residues: Glucokinase (342 aa).

7 to 12 (GDIGGT) provides a ligand contact to ATP.

It belongs to the bacterial glucokinase family.

The protein localises to the cytoplasm. It carries out the reaction D-glucose + ATP = D-glucose 6-phosphate + ADP + H(+). The chain is Glucokinase from Trichormus variabilis (strain ATCC 29413 / PCC 7937) (Anabaena variabilis).